The following is a 323-amino-acid chain: Calcium homeostasis modulator protein 2 (323 aa).

The Cytoplasmic portion of the chain corresponds to Met-1–Val-21. A central pore region spans residues Leu-14–Phe-39. The chain crosses the membrane as a helical span at residues Met-22 to Ala-43. Over Phe-44 to Arg-52 the chain is Extracellular. 2 cysteine pairs are disulfide-bonded: Cys-46–Cys-130 and Cys-48–Cys-162. Residues Asn-53–Asn-76 form a helical membrane-spanning segment. The Cytoplasmic portion of the chain corresponds to Asn-77–Leu-101. A helical transmembrane segment spans residues Leu-102–Leu-132. Residues Ser-133–Arg-179 are Extracellular-facing. The segment at Glu-145–His-152 is hemichannel docking. The chain crosses the membrane as a helical span at residues Leu-180–Lys-206. The Cytoplasmic portion of the chain corresponds to His-207–Ser-323. The interval Tyr-214–Phe-251 is intersubunit interaction.

This sequence belongs to the CALHM family. Homo-undecamer. Two undecameric hemichannels can assemble in a head-to-head manner to form a gap junction.

The protein resides in the cell membrane. It carries out the reaction ATP(in) = ATP(out). In terms of biological role, pore-forming subunit of Ca(2+) homeostasis modulator channels. Mediates ATP release from astrocytes and ATP-induced Ca(2+) influx in microglia thus regulating neuronal ATP and Ca(2+) homeostasis, synaptic transmission and neuroinflammatory response. May form intercellular gap junctions. The gating mechanism remains unknown. The chain is Calcium homeostasis modulator protein 2 (CALHM2) from Bos taurus (Bovine).